Reading from the N-terminus, the 496-residue chain is Apolipoprotein N-acyltransferase (496 aa).

6 helical membrane-spanning segments follow: residues 6–26 (IICL…FFIP), 50–70 (FGYL…SIGV), 77–97 (FWWA…FFIS), 114–134 (LIFC…LTGL), 148–168 (ILIQ…VIYI), and 183–203 (LKIL…YGAV). The 245-residue stretch at 220–464 (VQPSIPQTAK…QGLIPQKLTT (245 aa)) folds into the CN hydrolase domain. The active-site Proton acceptor is the Glu-259. Residue Lys-322 is part of the active site. Residue Cys-372 is the Nucleophile of the active site. A helical transmembrane segment spans residues 474–494 (FAMLLSIVFIILIHYLLSLIF).

The protein belongs to the CN hydrolase family. Apolipoprotein N-acyltransferase subfamily.

The protein localises to the cell inner membrane. The catalysed reaction is N-terminal S-1,2-diacyl-sn-glyceryl-L-cysteinyl-[lipoprotein] + a glycerophospholipid = N-acyl-S-1,2-diacyl-sn-glyceryl-L-cysteinyl-[lipoprotein] + a 2-acyl-sn-glycero-3-phospholipid + H(+). It functions in the pathway protein modification; lipoprotein biosynthesis (N-acyl transfer). Its function is as follows. Catalyzes the phospholipid dependent N-acylation of the N-terminal cysteine of apolipoprotein, the last step in lipoprotein maturation. This Rickettsia prowazekii (strain Madrid E) protein is Apolipoprotein N-acyltransferase.